The chain runs to 157 residues: Capsid protein (157 aa).

An N-acetylserine; by host modification is found at serine 2.

Belongs to the virgaviridae capsid protein family.

It is found in the virion. Functionally, capsid protein self-assembles to form rod-shaped virions about 18 nm in diameter with a central canal enclosing the viral genomic RNA. The protein is Capsid protein (CP) of Digitalis lanata (Grecian foxglove).